We begin with the raw amino-acid sequence, 1020 residues long: Mastermind-like protein 1 (1020 aa).

Residues 1–97 (MVLPTCPMAE…PAPASAPAAA (97 aa)) form a required for interaction with NOTCH proteins region. Serine 45 is subject to Phosphoserine. Over residues 67–76 (KAKRAGKHRQ) the composition is skewed to basic residues. Residues 67–191 (KAKRAGKHRQ…TAGKHSLGLD (125 aa)) form a disordered region. Over residues 77–99 (PPAAATAPVAAPAPASAPAAARL) the composition is skewed to low complexity. The span at 100-122 (DAADGPEHGRPVAHLHDTVKRSL) shows a compositional bias: basic and acidic residues. The segment covering 124-133 (SAASPQNGDQ) has biased composition (polar residues). Phosphoserine is present on residues serine 127, serine 310, serine 321, and serine 367. 6 disordered regions span residues 335–522 (GASS…YGNT), 575–598 (PFRSLVPPGQEQNPSSVPVAAPAA), 663–686 (EKQQFQRHLTRPPPQYQDPTQSTF), 725–748 (SMGPGHAPVSSLPSSSGQQDRGVA), 794–866 (QNAS…NPFT), and 888–959 (AMPS…RPGL). Over residues 344–369 (DSPSLGSSQTLFHTTSQPGVDNSSPN) the composition is skewed to polar residues. The span at 373–383 (ASAQAQSAQRA) shows a compositional bias: low complexity. Residues 399–410 (ELSSAHQLQQIA) show a composition bias toward polar residues. The span at 419–435 (LQNPQQAAPAPGPGQLA) shows a compositional bias: low complexity. Polar residues predominate over residues 491 to 515 (PSHSNLLSHQSPSNLNQNPVNNQGS). Positions 588–598 (PSSVPVAAPAA) are enriched in low complexity. A compositionally biased stretch (polar residues) spans 794–818 (QNASTSAAYGQNSLGSASLSQQHSK). Lysine 827 is subject to N6-acetyllysine. Positions 837–864 (MGSQNASWQHQGMPNLSSQTSGNSSVNP) are enriched in polar residues. Low complexity predominate over residues 911-920 (SAQQRNSAPA). Serine 1019 carries the phosphoserine modification.

Belongs to the mastermind family. Interacts (via N-terminus) with NOTCH1, NOTCH2, NOTCH3 and NOTCH4 (via ankyrin repeat region). Interacts (via N-terminus) with p53 (via DNA-binding region). Forms a DNA-binding complex with Notch proteins and RBPSUH/RBP-J kappa/CBF1. Also binds CREBBP/CBP and CDK8. Forms a complex with PRAG1, NOTCH1 and MAML1, in a MAML1-dependent manner. As to expression, at E9.5, strongly expressed in the telencephalon, first branchial arch, forelimb buds and somites. By 10.5 dpc, continuously expressed in brain and spinal cord. Also expressed in first and second branchial arches and limb buds. By 11.5 dpc, expression in CNS is weak but increases in mesodermal tissues. At 14.5 dpc, detected in epithelial cells in trachea, esophagus and proximal and distal tubules of the developing lungs.

It is found in the nucleus speckle. Its function is as follows. Acts as a transcriptional coactivator for NOTCH proteins. Has been shown to amplify NOTCH-induced transcription of HES1. Enhances phosphorylation and proteolytic turnover of the NOTCH intracellular domain in the nucleus through interaction with CDK8. Binds to CREBBP/CBP which promotes nucleosome acetylation at NOTCH enhancers and activates transcription. Induces phosphorylation and localization of CREBBP to nuclear foci. Plays a role in hematopoietic development by regulating NOTCH-mediated lymphoid cell fate decisions. This chain is Mastermind-like protein 1, found in Mus musculus (Mouse).